The chain runs to 230 residues: Type II restriction enzyme SinI (230 aa).

It carries out the reaction Endonucleolytic cleavage of DNA to give specific double-stranded fragments with terminal 5'-phosphates.. Functionally, a P subtype restriction enzyme that recognizes the double-stranded sequence 5'-GGWCC-3' and cleaves after G-1. This chain is Type II restriction enzyme SinI (sinIR), found in Salmonella infantis.